A 545-amino-acid polypeptide reads, in one-letter code: CTP synthase (545 aa).

The amidoligase domain stretch occupies residues 1-266 (MTTNYIFVTG…DDYICKRFSL (266 aa)). Serine 14 lines the CTP pocket. Position 14 (serine 14) interacts with UTP. Residues 15–20 (SLGKGI) and aspartate 72 each bind ATP. Mg(2+) is bound by residues aspartate 72 and glutamate 140. Residues 147–149 (DIE), 187–192 (KTKPTQ), and lysine 223 each bind CTP. Residues 187–192 (KTKPTQ) and lysine 223 contribute to the UTP site. Residue 239-241 (KDV) participates in ATP binding. Residues 291–542 (TIGMIGKYVE…VKAAGDYQKR (252 aa)) enclose the Glutamine amidotransferase type-1 domain. An L-glutamine-binding site is contributed by glycine 352. Cysteine 379 serves as the catalytic Nucleophile; for glutamine hydrolysis. L-glutamine-binding positions include 380–383 (LGMQ), glutamate 403, and arginine 470. Residues histidine 515 and glutamate 517 contribute to the active site.

It belongs to the CTP synthase family. As to quaternary structure, homotetramer.

The catalysed reaction is UTP + L-glutamine + ATP + H2O = CTP + L-glutamate + ADP + phosphate + 2 H(+). It carries out the reaction L-glutamine + H2O = L-glutamate + NH4(+). It catalyses the reaction UTP + NH4(+) + ATP = CTP + ADP + phosphate + 2 H(+). The protein operates within pyrimidine metabolism; CTP biosynthesis via de novo pathway; CTP from UDP: step 2/2. Its activity is regulated as follows. Allosterically activated by GTP, when glutamine is the substrate; GTP has no effect on the reaction when ammonia is the substrate. The allosteric effector GTP functions by stabilizing the protein conformation that binds the tetrahedral intermediate(s) formed during glutamine hydrolysis. Inhibited by the product CTP, via allosteric rather than competitive inhibition. Functionally, catalyzes the ATP-dependent amination of UTP to CTP with either L-glutamine or ammonia as the source of nitrogen. Regulates intracellular CTP levels through interactions with the four ribonucleotide triphosphates. In Yersinia pseudotuberculosis serotype O:1b (strain IP 31758), this protein is CTP synthase.